Reading from the N-terminus, the 257-residue chain is MTTSLYWQTEGEGSDLVLIHGWGMNGAVWQTTSEKLSQHYRVHTVDLSGYGHSAELGSADFDEMVKQVLAQAPKKAAWLGWSLGGLIATKAALTSPERVSQLITVASSPCFSAEKGWRGIKPLILSQFTEQLKTDFTLTVERFMALQAMGSPNAKQDIKLIKKAVFSRPMPDQQALATGLMILADIDLREAVSQLSMPVCRMYGRLDGLVPIKVAHYMDELMPNSAKIVFEQASHAPFISHNDEFISELRTFLNQHA.

In terms of domain architecture, AB hydrolase-1 spans 16 to 240 (LVLIHGWGMN…EQASHAPFIS (225 aa)). Substrate is bound by residues W22, 82–83 (SL), and 143–147 (FMALQ). Catalysis depends on S82, which acts as the Nucleophile. Active-site residues include D207 and H235. Residue H235 participates in substrate binding.

Belongs to the AB hydrolase superfamily. Carboxylesterase BioH family. In terms of assembly, monomer.

The protein resides in the cytoplasm. It carries out the reaction 6-carboxyhexanoyl-[ACP] methyl ester + H2O = 6-carboxyhexanoyl-[ACP] + methanol + H(+). It participates in cofactor biosynthesis; biotin biosynthesis. Functionally, the physiological role of BioH is to remove the methyl group introduced by BioC when the pimeloyl moiety is complete. It allows to synthesize pimeloyl-ACP via the fatty acid synthetic pathway through the hydrolysis of the ester bonds of pimeloyl-ACP esters. The chain is Pimeloyl-[acyl-carrier protein] methyl ester esterase from Aliivibrio fischeri (strain MJ11) (Vibrio fischeri).